Reading from the N-terminus, the 126-residue chain is C-type natriuretic peptide (126 aa).

Residues 1-23 (MHLSQLLACALLLTLLSLRPSEA) form the signal peptide. A disordered region spans residues 19–72 (RPSEAKPGAPPKVPRTPPGEEVAEPQAAGGGQKKGDKTPGGGGANLKGDRSRLL). Residues 24-73 (KPGAPPKVPRTPPGEEVAEPQAAGGGQKKGDKTPGGGGANLKGDRSRLLR) constitute a propeptide that is removed on maturation. The segment covering 26–35 (GAPPKVPRTP) has biased composition (pro residues). Over residues 46–63 (AGGGQKKGDKTPGGGGAN) the composition is skewed to gly residues. A disulfide bridge links Cys-110 with Cys-126.

Belongs to the natriuretic peptide family. Post-translationally, degraded by IDE (in vitro).

The protein localises to the secreted. Hormone which plays a role in endochondral ossification through regulation of cartilaginous growth plate chondrocytes proliferation and differentiation. May also be vasoactive and natriuretic. Acts by specifically binding and stimulating NPR2 to produce cGMP. Binds the clearance receptor NPR3. The sequence is that of C-type natriuretic peptide (NPPC) from Sus scrofa (Pig).